The primary structure comprises 500 residues: Protein psiE (500 aa).

The first 18 residues, 1-18 (MKLISVLITFLLATVIYS), serve as a signal peptide directing secretion. Asn-59 carries N-linked (GlcNAc...) asparagine glycosylation. Residues 114–256 (TYDTTRKIYV…KDYCGVCQGD (143 aa)) enclose the PA14 domain. Asn-314, Asn-341, Asn-366, Asn-420, and Asn-469 each carry an N-linked (GlcNAc...) asparagine glycan.

Belongs to the prespore-cell-inducing factor family.

The protein localises to the secreted. The sequence is that of Protein psiE (psiE) from Dictyostelium discoideum (Social amoeba).